A 176-amino-acid polypeptide reads, in one-letter code: dCTP deaminase (176 aa).

DCTP contacts are provided by residues 102 to 107 and Asp118; that span reads RSTFAR. The active-site Proton donor/acceptor is Glu128. Tyr160 and Gln167 together coordinate dCTP.

This sequence belongs to the dCTP deaminase family. Homotrimer.

The catalysed reaction is dCTP + H2O + H(+) = dUTP + NH4(+). It participates in pyrimidine metabolism; dUMP biosynthesis; dUMP from dCTP (dUTP route): step 1/2. Functionally, catalyzes the deamination of dCTP to dUTP. The polypeptide is dCTP deaminase (Hyperthermus butylicus (strain DSM 5456 / JCM 9403 / PLM1-5)).